A 433-amino-acid polypeptide reads, in one-letter code: Inositol hexakisphosphate kinase 1 (433 aa).

Residues 100-160 are disordered; the sequence is ETVEQDDTPE…SPKVELHSHS (61 aa). A compositionally biased stretch (basic residues) spans 113–123; that stretch reads PRRKHSRRSLH. Polar residues predominate over residues 139–149; that stretch reads SFETSESSQEA. The span at 150-160 shows a compositional bias: basic and acidic residues; it reads KSPKVELHSHS. Ser151 carries the phosphoserine modification. 220-228 serves as a coordination point for substrate; the sequence is PCVLDLKMG. The tract at residues 359-383 is disordered; sequence EVPPPCGPSTSPSSTSLEAGPSSPP.

This sequence belongs to the inositol phosphokinase (IPK) family. Highly expressed in brain and testis. Detected at much lower levels in heart, kidney, liver, lung and spleen.

Its subcellular location is the cytoplasm. The protein resides in the nucleus. The enzyme catalyses 1D-myo-inositol hexakisphosphate + ATP = 5-diphospho-1D-myo-inositol 1,2,3,4,6-pentakisphosphate + ADP. It carries out the reaction 1-diphospho-1D-myo-inositol 2,3,4,5,6-pentakisphosphate + ATP + H(+) = 1,5-bis(diphospho)-1D-myo-inositol 2,3,4,6-tetrakisphosphate + ADP. Functionally, converts inositol hexakisphosphate (InsP6) to diphosphoinositol pentakisphosphate (InsP7/PP-InsP5). Converts 1,3,4,5,6-pentakisphosphate (InsP5) to PP-InsP4. The polypeptide is Inositol hexakisphosphate kinase 1 (Ip6k1) (Mus musculus (Mouse)).